The following is a 163-amino-acid chain: MPKPPDYSELSDSLTLPVGTGRFSGPLHRAWRMMNFRQRMGWIGVGLYLLASAAAFYYVFEINETYNRLALEHIQQHPEEPLEGTTWTHSLKSRLLSLPFWFWTIIFLIPYLQMFLFLYSCTRADPKTVGYCIIPICLAVICNRHQAFVKASNQISRLQLIDT.

Transmembrane regions (helical) follow at residues 40–60 (MGWI…YYVF) and 98–118 (LPFW…FLFL).

The protein belongs to the LYSET family. Interacts with GNPTAB; this interaction is important for proper localization of GNPTAB in Golgi stacks. Interacts with MBTPS1.

The protein localises to the golgi apparatus membrane. Its function is as follows. Required for mannose-6-phosphate-dependent trafficking of lysosomal enzymes. LYSET bridges GlcNAc-1-phosphate transferase (GNPTAB), to the membrane-bound transcription factor site-1 protease (MBTPS1), thus allowing proteolytic activation of the GNPTAB. GNPTAB is involved in the regulation of M6P-dependent Golgi-to-lysosome trafficking of lysosomal enzymes. LYSET is thus an essential factor for maturation and delivery of lysosomal hydrolases. The sequence is that of Lysosomal enzyme trafficking factor (LYSET) from Sus scrofa (Pig).